We begin with the raw amino-acid sequence, 99 residues long: Small ribosomal subunit protein uS14c (99 aa).

This sequence belongs to the universal ribosomal protein uS14 family. As to quaternary structure, part of the 30S ribosomal subunit.

It localises to the plastid. The protein localises to the chloroplast. In terms of biological role, binds 16S rRNA, required for the assembly of 30S particles. This is Small ribosomal subunit protein uS14c from Welwitschia mirabilis (Tree tumbo).